Consider the following 51-residue polypeptide: Large ribosomal subunit protein bL33 (51 aa).

This sequence belongs to the bacterial ribosomal protein bL33 family.

The protein is Large ribosomal subunit protein bL33 of Psychrobacter sp. (strain PRwf-1).